Here is a 374-residue protein sequence, read N- to C-terminus: Glutamate 5-kinase (374 aa).

Lysine 8 is an ATP binding site. 3 residues coordinate substrate: serine 49, aspartate 136, and asparagine 148. ATP contacts are provided by residues 168–169 (TD) and 211–217 (TGGMQTK). In terms of domain architecture, PUA spans 276–354 (QGILTLDDGA…TQIRQILGYG (79 aa)).

The protein belongs to the glutamate 5-kinase family.

Its subcellular location is the cytoplasm. The catalysed reaction is L-glutamate + ATP = L-glutamyl 5-phosphate + ADP. It participates in amino-acid biosynthesis; L-proline biosynthesis; L-glutamate 5-semialdehyde from L-glutamate: step 1/2. Catalyzes the transfer of a phosphate group to glutamate to form L-glutamate 5-phosphate. The chain is Glutamate 5-kinase from Picosynechococcus sp. (strain ATCC 27264 / PCC 7002 / PR-6) (Agmenellum quadruplicatum).